The sequence spans 72 residues: MDAYAVQHFYNNARKPLAPTTLHSGNLPAAAYENVMFIRKLVCRENAPGAHERPFCAHHDYNKENLSEKSRL.

Belongs to the baculoviridae 8 kDa protein family.

This is an uncharacterized protein from Orgyia pseudotsugata (Douglas-fir tussock moth).